We begin with the raw amino-acid sequence, 641 residues long: Chaperone protein DnaK (641 aa).

Residue threonine 199 is modified to Phosphothreonine; by autocatalysis. Over residues 577 to 590 (KGDNKDEIETRTQK) the composition is skewed to basic and acidic residues. Residues 577-641 (KGDNKDEIET…EFEEVDDKKK (65 aa)) are disordered. Positions 617 to 626 (GAEQASAQQD) are enriched in low complexity. Positions 627–641 (DVVDAEFEEVDDKKK) are enriched in acidic residues.

This sequence belongs to the heat shock protein 70 family.

In terms of biological role, acts as a chaperone. The sequence is that of Chaperone protein DnaK from Thioalkalivibrio sulfidiphilus (strain HL-EbGR7).